Consider the following 278-residue polypeptide: 2-dehydro-3-deoxyphosphooctonate aldolase (278 aa).

Belongs to the KdsA family.

It localises to the cytoplasm. It carries out the reaction D-arabinose 5-phosphate + phosphoenolpyruvate + H2O = 3-deoxy-alpha-D-manno-2-octulosonate-8-phosphate + phosphate. It functions in the pathway carbohydrate biosynthesis; 3-deoxy-D-manno-octulosonate biosynthesis; 3-deoxy-D-manno-octulosonate from D-ribulose 5-phosphate: step 2/3. It participates in bacterial outer membrane biogenesis; lipopolysaccharide biosynthesis. In Koribacter versatilis (strain Ellin345), this protein is 2-dehydro-3-deoxyphosphooctonate aldolase.